Here is a 361-residue protein sequence, read N- to C-terminus: Molybdenum import ATP-binding protein ModC (361 aa).

The 228-residue stretch at 1 to 228 folds into the ABC transporter domain; it reads MLNINIEKQL…EQMRPWVPLQ (228 aa). Position 31-38 (31-38) interacts with ATP; the sequence is GRSGAGKT. Positions 289–356 constitute a Mop domain; it reads GSSVRNLLRG…IKGVTMTQMD (68 aa).

Belongs to the ABC transporter superfamily. Molybdate importer (TC 3.A.1.8) family. As to quaternary structure, the complex is composed of two ATP-binding proteins (ModC), two transmembrane proteins (ModB) and a solute-binding protein (ModA).

Its subcellular location is the cell inner membrane. It catalyses the reaction molybdate(out) + ATP + H2O = molybdate(in) + ADP + phosphate + H(+). Functionally, part of the ABC transporter complex ModABC involved in molybdenum import. Responsible for energy coupling to the transport system. This chain is Molybdenum import ATP-binding protein ModC, found in Shewanella sp. (strain MR-7).